Here is a 1224-residue protein sequence, read N- to C-terminus: DNA-directed RNA polymerase subunit beta' (1224 aa).

Cysteine 60, cysteine 62, cysteine 75, and cysteine 78 together coordinate Zn(2+). The Mg(2+) site is built by aspartate 449, aspartate 451, and aspartate 453. The Zn(2+) site is built by cysteine 819, cysteine 893, cysteine 900, and cysteine 903.

It belongs to the RNA polymerase beta' chain family. As to quaternary structure, the RNAP catalytic core consists of 2 alpha, 1 beta, 1 beta' and 1 omega subunit. When a sigma factor is associated with the core the holoenzyme is formed, which can initiate transcription. Mg(2+) serves as cofactor. Zn(2+) is required as a cofactor.

It carries out the reaction RNA(n) + a ribonucleoside 5'-triphosphate = RNA(n+1) + diphosphate. Functionally, DNA-dependent RNA polymerase catalyzes the transcription of DNA into RNA using the four ribonucleoside triphosphates as substrates. This Lactobacillus johnsonii (strain CNCM I-12250 / La1 / NCC 533) protein is DNA-directed RNA polymerase subunit beta'.